Reading from the N-terminus, the 127-residue chain is MLATLLLALIRAYQMTLSRLIVALMGPVCRFEPSCSRYAAACIVDHGALRGSLLSLKRLCRCHPFHPGGFDPPPPPRLHRAAAARMPRQRDADPRDTTRCSSTGAELASHASSPCRAGFSGRVTLMD.

The tract at residues 71–106 (DPPPPPRLHRAAAARMPRQRDADPRDTTRCSSTGAE) is disordered. Residues 88–98 (RQRDADPRDTT) show a composition bias toward basic and acidic residues.

This sequence belongs to the UPF0161 family.

The protein resides in the cell inner membrane. Functionally, could be involved in insertion of integral membrane proteins into the membrane. The protein is Putative membrane protein insertion efficiency factor of Sorangium cellulosum (strain So ce56) (Polyangium cellulosum (strain So ce56)).